The following is a 509-amino-acid chain: ATP synthase subunit alpha (509 aa).

Gly-169 to Thr-176 contacts ATP.

The protein belongs to the ATPase alpha/beta chains family. As to quaternary structure, F-type ATPases have 2 components, CF(1) - the catalytic core - and CF(0) - the membrane proton channel. CF(1) has five subunits: alpha(3), beta(3), gamma(1), delta(1), epsilon(1). CF(0) has three main subunits: a(1), b(2) and c(9-12). The alpha and beta chains form an alternating ring which encloses part of the gamma chain. CF(1) is attached to CF(0) by a central stalk formed by the gamma and epsilon chains, while a peripheral stalk is formed by the delta and b chains.

Its subcellular location is the cell inner membrane. It carries out the reaction ATP + H2O + 4 H(+)(in) = ADP + phosphate + 5 H(+)(out). Produces ATP from ADP in the presence of a proton gradient across the membrane. The alpha chain is a regulatory subunit. This Brucella anthropi (strain ATCC 49188 / DSM 6882 / CCUG 24695 / JCM 21032 / LMG 3331 / NBRC 15819 / NCTC 12168 / Alc 37) (Ochrobactrum anthropi) protein is ATP synthase subunit alpha.